We begin with the raw amino-acid sequence, 238 residues long: Ribitol-5-phosphate cytidylyltransferase (238 aa).

CTP-binding positions include 7 to 10 (LAGG) and 81 to 87 (GDDRNHT).

This sequence belongs to the IspD/TarI cytidylyltransferase family. TarI subfamily.

It catalyses the reaction D-ribitol 5-phosphate + CTP + H(+) = CDP-L-ribitol + diphosphate. Its pathway is cell wall biogenesis; poly(ribitol phosphate) teichoic acid biosynthesis. Catalyzes the transfer of the cytidylyl group of CTP to D-ribitol 5-phosphate. In Staphylococcus epidermidis (strain ATCC 35984 / DSM 28319 / BCRC 17069 / CCUG 31568 / BM 3577 / RP62A), this protein is Ribitol-5-phosphate cytidylyltransferase.